A 506-amino-acid chain; its full sequence is Protein nucleotidyltransferase YdiU (506 aa).

ATP-binding residues include Gly95, Gly97, Arg98, Lys118, Asp130, Gly131, Arg181, and Arg188. Asp257 (proton acceptor) is an active-site residue. Residues Asn258 and Asp267 each coordinate Mg(2+). Asp267 lines the ATP pocket. Positions 487 to 506 (KHYQDAPTPDQRVKQTFCGT) are disordered.

It belongs to the SELO family. The cofactor is Mg(2+). It depends on Mn(2+) as a cofactor.

It carries out the reaction L-seryl-[protein] + ATP = 3-O-(5'-adenylyl)-L-seryl-[protein] + diphosphate. The enzyme catalyses L-threonyl-[protein] + ATP = 3-O-(5'-adenylyl)-L-threonyl-[protein] + diphosphate. The catalysed reaction is L-tyrosyl-[protein] + ATP = O-(5'-adenylyl)-L-tyrosyl-[protein] + diphosphate. It catalyses the reaction L-histidyl-[protein] + UTP = N(tele)-(5'-uridylyl)-L-histidyl-[protein] + diphosphate. It carries out the reaction L-seryl-[protein] + UTP = O-(5'-uridylyl)-L-seryl-[protein] + diphosphate. The enzyme catalyses L-tyrosyl-[protein] + UTP = O-(5'-uridylyl)-L-tyrosyl-[protein] + diphosphate. In terms of biological role, nucleotidyltransferase involved in the post-translational modification of proteins. It can catalyze the addition of adenosine monophosphate (AMP) or uridine monophosphate (UMP) to a protein, resulting in modifications known as AMPylation and UMPylation. The chain is Protein nucleotidyltransferase YdiU from Shewanella denitrificans (strain OS217 / ATCC BAA-1090 / DSM 15013).